Consider the following 130-residue polypeptide: MSMQDPISDMLTRVRNGQAANKVAVKMPSSKLKVAIAALLKAEGYIADFAVEGDIKPELEITLKYFQAKPVIEQIQRVSRPGLRVYKKNDALPSVMGGLGIAVVSTSKGLMSDRAARKAGLGGEIICYVA.

Belongs to the universal ribosomal protein uS8 family. Part of the 30S ribosomal subunit. Contacts proteins S5 and S12.

Its function is as follows. One of the primary rRNA binding proteins, it binds directly to 16S rRNA central domain where it helps coordinate assembly of the platform of the 30S subunit. The protein is Small ribosomal subunit protein uS8 of Aliivibrio fischeri (strain ATCC 700601 / ES114) (Vibrio fischeri).